The following is a 701-amino-acid chain: Polyribonucleotide nucleotidyltransferase (701 aa).

Mg(2+) contacts are provided by D487 and D493. In terms of domain architecture, KH spans 554–613 (PTMIAMKIDTDKIRDVIGKGGATIRAICEETKASIDIEDDGSIKIFGETKEAAEAARQRV). An S1 motif domain is found at 623–691 (GKIYVGKVER…NRGRIKLSIK (69 aa)).

The protein belongs to the polyribonucleotide nucleotidyltransferase family. As to quaternary structure, component of the RNA degradosome, which is a multiprotein complex involved in RNA processing and mRNA degradation. It depends on Mg(2+) as a cofactor.

It is found in the cytoplasm. The catalysed reaction is RNA(n+1) + phosphate = RNA(n) + a ribonucleoside 5'-diphosphate. Functionally, involved in mRNA degradation. Catalyzes the phosphorolysis of single-stranded polyribonucleotides processively in the 3'- to 5'-direction. The polypeptide is Polyribonucleotide nucleotidyltransferase (Pseudomonas fluorescens (strain SBW25)).